A 939-amino-acid polypeptide reads, in one-letter code: Translation initiation factor IF-2 (939 aa).

Positions 81-94 are enriched in basic and acidic residues; the sequence is EEQSRKAYEKEQQL. Disordered regions lie at residues 81–303 and 316–337; these read EEQS…KKVE and TISG…KMRR. The span at 99–108 shows a compositional bias: low complexity; that stretch reads SSAPSPAPAA. Composition is skewed to basic and acidic residues over residues 112–127 and 148–173; these read EPVK…RHEP and SPKE…EKAA. Over residues 178 to 189 the composition is skewed to low complexity; the sequence is EAQPEAQSQQEP. Residues 244-255 show a composition bias toward basic and acidic residues; it reads FKENAAELKDEF. Residues 276-287 show a composition bias toward low complexity; sequence AAGEGESTTGGE. Residues 292–301 show a composition bias toward basic residues; that stretch reads KKKKGKKKKK. A compositionally biased stretch (low complexity) spans 318–328; it reads SGMDDSGSSGS. Residues 436-606 form the tr-type G domain; it reads TRPPVVTIMG…LTEAEVRELK (171 aa). The G1 stretch occupies residues 445–452; that stretch reads GHVDHGKT. 445-452 serves as a coordination point for GTP; that stretch reads GHVDHGKT. The interval 470–474 is G2; sequence GITQH. Residues 492–495 are G3; it reads DTPG. Residues 492 to 496 and 546 to 549 contribute to the GTP site; these read DTPGH and NKID. Residues 546-549 are G4; sequence NKID. The segment at 582–584 is G5; that stretch reads SAK.

This sequence belongs to the TRAFAC class translation factor GTPase superfamily. Classic translation factor GTPase family. IF-2 subfamily.

It localises to the cytoplasm. Functionally, one of the essential components for the initiation of protein synthesis. Protects formylmethionyl-tRNA from spontaneous hydrolysis and promotes its binding to the 30S ribosomal subunits. Also involved in the hydrolysis of GTP during the formation of the 70S ribosomal complex. The chain is Translation initiation factor IF-2 from Chlorobaculum parvum (strain DSM 263 / NCIMB 8327) (Chlorobium vibrioforme subsp. thiosulfatophilum).